We begin with the raw amino-acid sequence, 272 residues long: Small ribosomal subunit protein uS2 (272 aa).

Residues 224 to 233 (EGKKAREERQ) are compositionally biased toward basic and acidic residues. Positions 224-272 (EGKKAREERQLAAAKDAAGDAKPEAEEAPAAAEAEEAPAAEAEEAPAAE) are disordered. Residues 256–272 (EAEEAPAAEAEEAPAAE) show a composition bias toward acidic residues.

This sequence belongs to the universal ribosomal protein uS2 family.

This is Small ribosomal subunit protein uS2 from Corynebacterium glutamicum (strain ATCC 13032 / DSM 20300 / JCM 1318 / BCRC 11384 / CCUG 27702 / LMG 3730 / NBRC 12168 / NCIMB 10025 / NRRL B-2784 / 534).